A 269-amino-acid polypeptide reads, in one-letter code: AA9 family lytic polysaccharide monooxygenase I (269 aa).

An N-terminal signal peptide occupies residues 1 to 17 (MFSKKITALALVSAVKA). His-18 and His-103 together coordinate Cu(2+). A disulfide bridge links Cys-73 with Cys-196. An N-linked (GlcNAc...) asparagine glycan is attached at Asn-156. O2 is bound by residues His-182 and Gln-191. Residue Tyr-193 participates in Cu(2+) binding.

This sequence belongs to the polysaccharide monooxygenase AA9 family. The cofactor is Cu(2+).

It localises to the secreted. It carries out the reaction [(1-&gt;4)-beta-D-glucosyl]n+m + reduced acceptor + O2 = 4-dehydro-beta-D-glucosyl-[(1-&gt;4)-beta-D-glucosyl]n-1 + [(1-&gt;4)-beta-D-glucosyl]m + acceptor + H2O.. Lytic polysaccharide monooxygenase (LPMO) that depolymerizes crystalline and amorphous polysaccharides via the oxidation of scissile alpha- or beta-(1-4)-glycosidic bonds, yielding C1 and C4 oxidation products. Catalysis by LPMOs requires the reduction of the active-site copper from Cu(II) to Cu(I) by a reducing agent and H(2)O(2) or O(2) as a cosubstrate. This chain is AA9 family lytic polysaccharide monooxygenase I, found in Botryotinia fuckeliana (strain B05.10) (Noble rot fungus).